The sequence spans 490 residues: Betaine aldehyde dehydrogenase (490 aa).

Residues serine 26, isoleucine 27, and aspartate 93 each contribute to the K(+) site. Residue 150–152 (GAW) participates in NAD(+) binding. The Charge relay system role is filled by lysine 162. NAD(+) is bound by residues 176–179 (KPSE) and 230–233 (GVET). Leucine 246 is a K(+) binding site. Glutamate 252 functions as the Proton acceptor in the catalytic mechanism. Positions 254, 286, and 387 each coordinate NAD(+). The active-site Nucleophile is cysteine 286. A Cysteine sulfenic acid (-SOH) modification is found at cysteine 286. The K(+) site is built by lysine 457 and glycine 460. Glutamate 464 serves as the catalytic Charge relay system.

Belongs to the aldehyde dehydrogenase family. Dimer of dimers. K(+) is required as a cofactor.

It carries out the reaction betaine aldehyde + NAD(+) + H2O = glycine betaine + NADH + 2 H(+). Its pathway is amine and polyamine biosynthesis; betaine biosynthesis via choline pathway; betaine from betaine aldehyde: step 1/1. In terms of biological role, involved in the biosynthesis of the osmoprotectant glycine betaine. Catalyzes the irreversible oxidation of betaine aldehyde to the corresponding acid. This Acinetobacter baumannii (strain AB307-0294) protein is Betaine aldehyde dehydrogenase.